Consider the following 264-residue polypeptide: MAVGKNKRLTKGGKKGAKKKIVDPFSKKDWYDVKAPAMFNIRNLGKTLVTRTQGTKIASDGLKGRVFEVSLADLQNDEVAFRKFKLITEDVQGKNCLTNFHGMDLTRDKMCSMVKKWQTMIEAHVDVKTTDGYLLRLFCVGFTKKRNNQIRKTSYAQHQQVRQIRKKMMEIMSREVQTNDLKEVVNKLIPDSIGKDIEKACQSIYPLHDVYARKVKMLKKPKFELGKLMELHGEGGGSGKPAADETGAKVERADGYEPPVQESV.

The tract at residues Gly233–Val264 is disordered. Residues Ala242–Gly255 are compositionally biased toward basic and acidic residues.

It belongs to the eukaryotic ribosomal protein eS1 family. Component of the small ribosomal subunit. Mature ribosomes consist of a small (40S) and a large (60S) subunit. The 40S subunit contains about 33 different proteins and 1 molecule of RNA (18S). The 60S subunit contains about 49 different proteins and 3 molecules of RNA (28S, 5.8S and 5S). Part of the small subunit (SSU) processome, composed of more than 70 proteins and the RNA chaperone small nucleolar RNA (snoRNA) U3.

It is found in the cytoplasm. Its subcellular location is the nucleus. The protein localises to the nucleolus. In terms of biological role, component of the small ribosomal subunit. The ribosome is a large ribonucleoprotein complex responsible for the synthesis of proteins in the cell. Part of the small subunit (SSU) processome, first precursor of the small eukaryotic ribosomal subunit. During the assembly of the SSU processome in the nucleolus, many ribosome biogenesis factors, an RNA chaperone and ribosomal proteins associate with the nascent pre-rRNA and work in concert to generate RNA folding, modifications, rearrangements and cleavage as well as targeted degradation of pre-ribosomal RNA by the RNA exosome. May play a role during erythropoiesis. In Xenopus laevis (African clawed frog), this protein is Small ribosomal subunit protein eS1B (rps3a-b).